The following is a 582-amino-acid chain: uncharacterized protein (582 aa).

The next 6 membrane-spanning stretches (helical) occupy residues 17–37 (VAML…LPTV), 57–77 (LGAV…GAVY), 131–151 (MTAT…IMAI), 156–176 (ALTW…YWII), 239–259 (ALML…LIWF), and 271–291 (VGSL…VLMA). The ABC transmembrane type-1 domain occupies 17–300 (VAMLMMLQLV…ATMTLAVLPR (284 aa)). The ABC transporter domain occupies 335–571 (VRLAGATFTY…CPTYAEFAAS (237 aa)). 369–376 (GSTGSGKS) contacts ATP.

The protein belongs to the ABC transporter superfamily.

Its subcellular location is the cell membrane. This is an uncharacterized protein from Mycobacterium tuberculosis (strain CDC 1551 / Oshkosh).